We begin with the raw amino-acid sequence, 201 residues long: Urease accessory protein UreG (201 aa).

G12 to T19 provides a ligand contact to GTP.

It belongs to the SIMIBI class G3E GTPase family. UreG subfamily. Homodimer. UreD, UreF and UreG form a complex that acts as a GTP-hydrolysis-dependent molecular chaperone, activating the urease apoprotein by helping to assemble the nickel containing metallocenter of UreC. The UreE protein probably delivers the nickel.

It localises to the cytoplasm. Facilitates the functional incorporation of the urease nickel metallocenter. This process requires GTP hydrolysis, probably effectuated by UreG. The protein is Urease accessory protein UreG of Dechloromonas aromatica (strain RCB).